Here is a 481-residue protein sequence, read N- to C-terminus: Proline--tRNA ligase (481 aa).

It belongs to the class-II aminoacyl-tRNA synthetase family. ProS type 3 subfamily. In terms of assembly, homodimer.

The protein localises to the cytoplasm. It catalyses the reaction tRNA(Pro) + L-proline + ATP = L-prolyl-tRNA(Pro) + AMP + diphosphate. Functionally, catalyzes the attachment of proline to tRNA(Pro) in a two-step reaction: proline is first activated by ATP to form Pro-AMP and then transferred to the acceptor end of tRNA(Pro). This is Proline--tRNA ligase from Chlorobium chlorochromatii (strain CaD3).